The following is an 838-amino-acid chain: Extragenic suppressor of kinetochore protein 1 (838 aa).

2 positions are modified to phosphoserine: Ser-411 and Ser-418. The segment at 411–468 is disordered; it reads SDEDDDDSTFSDKNSKDFKETEDMNGAEDMHGRAPQITKDNLNLTTTDSPMSEAEPVS. Thr-419 carries the phosphothreonine modification. The span at 423–442 shows a compositional bias: basic and acidic residues; the sequence is KNSKDFKETEDMNGAEDMHG. 4 positions are modified to phosphoserine: Ser-425, Ser-459, Ser-468, and Ser-491. Over residues 448–460 the composition is skewed to polar residues; sequence TKDNLNLTTTDSP. Position 493 is a phosphothreonine (Thr-493). Residue Ser-494 is modified to Phosphoserine. A compositionally biased stretch (acidic residues) spans 690–700; that stretch reads ELESNSSDDDV. 2 disordered regions span residues 690–745 and 757–838; these read ELES…DQDN and ISDN…NHGK. 2 positions are modified to phosphoserine: Ser-711 and Ser-713. Residues 714–723 are compositionally biased toward acidic residues; it reads NDEDDGNDED. Residues 724–734 are compositionally biased toward basic and acidic residues; it reads PLSREMSRRLS. 2 stretches are compositionally biased toward acidic residues: residues 768–779 and 806–818; these read SDEDDDDDDEVV and SDSE…DSSD.

The protein belongs to the SAPS family. As to quaternary structure, interacts with ppe1 and mis12.

The protein resides in the nucleus. In terms of biological role, has a role in chromosome segregation. May provide a dynamic connection between kinetochore microtubules and kinetochore chromatin. The chain is Extragenic suppressor of kinetochore protein 1 (ekc1) from Schizosaccharomyces pombe (strain 972 / ATCC 24843) (Fission yeast).